Consider the following 205-residue polypeptide: Large ribosomal subunit protein uL10 (205 aa).

Residues 167-205 (AQGAAPAEAKAEAPASEEKAADTPAEQPAESAPEAAPEA) form a disordered region. Composition is skewed to low complexity over residues 169 to 180 (GAAPAEAKAEAP) and 190 to 205 (PAEQ…APEA).

The protein belongs to the universal ribosomal protein uL10 family. In terms of assembly, part of the ribosomal stalk of the 50S ribosomal subunit. The N-terminus interacts with L11 and the large rRNA to form the base of the stalk. The C-terminus forms an elongated spine to which L12 dimers bind in a sequential fashion forming a multimeric L10(L12)X complex.

Forms part of the ribosomal stalk, playing a central role in the interaction of the ribosome with GTP-bound translation factors. The chain is Large ribosomal subunit protein uL10 from Treponema denticola (strain ATCC 35405 / DSM 14222 / CIP 103919 / JCM 8153 / KCTC 15104).